The chain runs to 225 residues: Protein-L-isoaspartate O-methyltransferase (225 aa).

Residue serine 75 is part of the active site.

It belongs to the methyltransferase superfamily. L-isoaspartyl/D-aspartyl protein methyltransferase family.

It is found in the cytoplasm. It catalyses the reaction [protein]-L-isoaspartate + S-adenosyl-L-methionine = [protein]-L-isoaspartate alpha-methyl ester + S-adenosyl-L-homocysteine. Its function is as follows. Catalyzes the methyl esterification of L-isoaspartyl residues in peptides and proteins that result from spontaneous decomposition of normal L-aspartyl and L-asparaginyl residues. It plays a role in the repair and/or degradation of damaged proteins. The polypeptide is Protein-L-isoaspartate O-methyltransferase (Xylella fastidiosa (strain M23)).